A 1798-amino-acid chain; its full sequence is Laminin subunit beta-2 (1798 aa).

The signal sequence occupies residues 1 to 32 (MELTSRERGRGQPLPWELRLGLLLSVLAATLA). Positions 43–282 (SRGSCYPATG…ALYELVVRGN (240 aa)) constitute a Laminin N-terminal domain. A glycan (N-linked (GlcNAc...) asparagine) is linked at Asn248. 19 disulfides stabilise this stretch: Cys283-Cys292, Cys285-Cys310, Cys312-Cys321, Cys324-Cys344, Cys347-Cys356, Cys349-Cys374, Cys377-Cys386, Cys389-Cys407, Cys410-Cys423, Cys412-Cys438, Cys440-Cys449, Cys452-Cys467, Cys470-Cys484, Cys472-Cys491, Cys493-Cys502, Cys505-Cys519, Cys522-Cys534, Cys524-Cys541, and Cys543-Cys552. 4 Laminin EGF-like domains span residues 283-346 (CFCY…ACRK), 347-409 (CECH…VCRS), 410-469 (CDCD…GCRR), and 470-521 (CQCN…GCRP). Asn368 carries an N-linked (GlcNAc...) asparagine glycan. The 31-residue stretch at 522-552 (CDCDVGGALDPQCDEGTGQCHCRQHMVGRRC) folds into the Laminin EGF-like 5; truncated domain. The Laminin IV type B domain occupies 561–777 (RPFLDHLIWE…LLISLSTLIY (217 aa)). 32 disulfides stabilise this stretch: Cys783–Cys795, Cys785–Cys802, Cys804–Cys813, Cys816–Cys828, Cys831–Cys843, Cys833–Cys850, Cys852–Cys861, Cys864–Cys874, Cys877–Cys886, Cys879–Cys893, Cys896–Cys905, Cys908–Cys924, Cys927–Cys943, Cys929–Cys954, Cys956–Cys965, Cys968–Cys983, Cys986–Cys1000, Cys988–Cys1007, Cys1010–Cys1019, Cys1022–Cys1035, Cys1038–Cys1058, Cys1040–Cys1065, Cys1067–Cys1076, Cys1079–Cys1092, Cys1095–Cys1107, Cys1097–Cys1114, Cys1116–Cys1125, Cys1128–Cys1140, Cys1143–Cys1155, Cys1145–Cys1162, Cys1164–Cys1173, and Cys1176–Cys1187. 8 Laminin EGF-like domains span residues 783–830 (CQCN…GCQA), 831–876 (CQCS…SCRP), 877–926 (CVCN…QCRP), 927–985 (CPCP…RCQL), 986–1037 (CECS…SCHR), 1038–1094 (CTCN…GCQP), 1095–1142 (CACH…QCHA), and 1143–1189 (CDCD…ACHP). The N-linked (GlcNAc...) asparagine glycan is linked to Asn1085. The segment at 1190–1409 (CHACFGDWDR…LSLTDINELV (220 aa)) is domain II. Asn1249, Asn1308, and Asn1348 each carry an N-linked (GlcNAc...) asparagine glycan. A coiled-coil region spans residues 1253 to 1319 (ASTAQLVEAT…TLRQLDQHLD (67 aa)). Positions 1338–1364 (SQSAEAERRANTSALAVPSPVSNSASA) are disordered. The segment covering 1350-1363 (SALAVPSPVSNSAS) has biased composition (low complexity). A domain alpha region spans residues 1410–1442 (CGAPGDAPCATSPCGGAGCRDEDGQPRCGGLSC). Residues 1443–1798 (NGAAATADLA…LQVQIYNTCQ (356 aa)) are domain I. Positions 1472-1526 (SILSRVAETRRQASEAQQRAQAALDKANASRGQVEQANQELQELIQSVKDFLNQE) form a coiled coil. N-linked (GlcNAc...) asparagine glycosylation is present at Asn1499. Position 1532 is a phosphoserine; by FAM20C (Ser1532). A coiled-coil region spans residues 1577 to 1790 (VGDVRRAEQL…RSVLQAINLQ (214 aa)).

In terms of assembly, laminin is a complex glycoprotein, consisting of three different polypeptide chains (alpha, beta, gamma), which are bound to each other by disulfide bonds into a cross-shaped molecule comprising one long and three short arms with globules at each end. Beta-2 is a subunit of laminin-3 (laminin-121 or S-laminin), laminin-4 (laminin-221 or S-merosin), laminin-7 (laminin-321 or KS-laminin), laminin-9 (laminin-421), laminin-11 (laminin-521), laminin-14 (laminin-423) and laminin-15 (laminin-523).

Its subcellular location is the secreted. It localises to the extracellular space. The protein resides in the extracellular matrix. It is found in the basement membrane. In terms of biological role, binding to cells via a high affinity receptor, laminin is thought to mediate the attachment, migration and organization of cells into tissues during embryonic development by interacting with other extracellular matrix components. This is Laminin subunit beta-2 (LAMB2) from Homo sapiens (Human).